A 296-amino-acid polypeptide reads, in one-letter code: Ribosomal RNA small subunit methyltransferase H (296 aa).

S-adenosyl-L-methionine is bound by residues 30-32 (GGH), Asp49, Phe76, Asp97, and Gln104.

Belongs to the methyltransferase superfamily. RsmH family.

It localises to the cytoplasm. The enzyme catalyses cytidine(1402) in 16S rRNA + S-adenosyl-L-methionine = N(4)-methylcytidine(1402) in 16S rRNA + S-adenosyl-L-homocysteine + H(+). Functionally, specifically methylates the N4 position of cytidine in position 1402 (C1402) of 16S rRNA. The chain is Ribosomal RNA small subunit methyltransferase H from Mesomycoplasma hyopneumoniae (strain 7448) (Mycoplasma hyopneumoniae).